Consider the following 891-residue polypeptide: Shieldin complex subunit 2 (891 aa).

The tract at residues 1–61 (MSQGSQVHIF…AGDQEFKNLE (61 aa)) is sufficient for interaction with SHLD3 and MAD2L2. An interaction with ASTE1 region spans residues 1–542 (MSQGSQVHIF…TYVSTKHSYL (542 aa)). Disordered regions lie at residues 184–222 (MSTG…KASD), 260–294 (NMEA…NEQS), and 333–357 (NEEN…WSCK). The segment covering 192–222 (PTGHRERQSQESFSDTRCEPQSEGAVRKASD) has biased composition (basic and acidic residues). Composition is skewed to polar residues over residues 260-271 (NMEAEPTGSQGV) and 342-354 (LCSS…NRSW). Residues 695-866 (KYSGVVLIKA…QQDFSLLDFC (172 aa)) are mediates interaction with SHLD1.

This sequence belongs to the SHLD2 family. As to quaternary structure, component of the shieldin complex, consisting of SHLD1, SHLD2, SHLD3 and MAD2L2/REV7. Within the complex, SHLD2 forms a scaffold which interacts with a SHLD3-MAD2L2 subcomplex via its N-terminus, and with SHLD1 via its C-terminus. Interacts with TP53BP1. Interacts with RIF1. Interacts with ASTE1.

It is found in the chromosome. Its function is as follows. Component of the shieldin complex, which plays an important role in repair of DNA double-stranded breaks (DSBs). During G1 and S phase of the cell cycle, the complex functions downstream of TP53BP1 to promote non-homologous end joining (NHEJ) and suppress DNA end resection. Mediates various NHEJ-dependent processes including immunoglobulin class-switch recombination, and fusion of unprotected telomeres. The polypeptide is Shieldin complex subunit 2 (Mus musculus (Mouse)).